The following is a 496-amino-acid chain: Lysine--tRNA ligase (496 aa).

2 residues coordinate Mg(2+): glutamate 409 and glutamate 416.

It belongs to the class-II aminoacyl-tRNA synthetase family. As to quaternary structure, homodimer. Mg(2+) serves as cofactor.

It is found in the cytoplasm. The enzyme catalyses tRNA(Lys) + L-lysine + ATP = L-lysyl-tRNA(Lys) + AMP + diphosphate. The protein is Lysine--tRNA ligase of Streptococcus agalactiae serotype III (strain NEM316).